Consider the following 990-residue polypeptide: Sister chromatid cohesion protein PDS5 homolog E (990 aa).

HEAT repeat units lie at residues 31-57 (DATL…SVQK), 58-96 (ALHP…ITAP), 153-190 (DLVL…DESE), 191-228 (EVPM…SCTC), and 232-269 (PCIM…HNDV). The disordered stretch occupies residues 262–565 (TTQAHNDVKP…AGEEVESNTN (304 aa)). Over residues 267-281 (NDVKPKDNEADEKIS) the composition is skewed to basic and acidic residues. Positions 302-314 (KGTRSKRSARGGT) are enriched in basic residues. Polar residues-rich tracts occupy residues 328 to 342 (EGLS…ASGS) and 394 to 410 (VGQT…SSGR). Composition is skewed to basic and acidic residues over residues 421–430 (TKMEETDHDV), 448–477 (PAKE…EKAD), and 503–512 (VHSDAKKKNS). The short motif at 458-465 (VKKHEDGI) is the Nuclear localization signal 1 element. 2 consecutive short sequence motifs (nuclear localization signal) follow at residues 539 to 546 (TKKSEQAP) and 583 to 590 (DKKFYEGV). The segment at 653-966 (KKRKIVSKNV…VGNEAEEDDQ (314 aa)) is disordered. Residues 662 to 673 (VEPSSSPEVRSS) show a composition bias toward low complexity. 2 short sequence motifs (nuclear localization signal) span residues 677 to 684 (MKKKDSVT) and 715 to 722 (LKKLNGEP). The segment covering 727–742 (GRTGKKQKVTQAMHRK) has biased composition (basic residues). A compositionally biased stretch (acidic residues) spans 746-760 (DCDEQEDLETKDEED). Basic and acidic residues-rich tracts occupy residues 761-810 (SLKL…KTNG), 819-890 (TDGK…KETN), and 898-947 (EEQK…DKET).

It belongs to the PDS5 family. Interacts with the cohesin complex.

Its subcellular location is the nucleus. Its function is as follows. Cohesin cofactor dispensable during the meiotic division but playing an important role in DNA repair by homologous recombination (HR) probably by helping SMC5/SMC6 complex. Regulator of sister chromatid cohesion in mitosis which may stabilize cohesin complex association with chromatin. May couple sister chromatid cohesion during mitosis to DNA replication. Cohesion ensures that chromosome partitioning is accurate in both meiotic and mitotic cells and plays an important role in DNA repair. In Arabidopsis thaliana (Mouse-ear cress), this protein is Sister chromatid cohesion protein PDS5 homolog E.